The primary structure comprises 236 residues: Biosynthetic peptidoglycan transglycosylase (236 aa).

A helical membrane pass occupies residues 12 to 31; it reads ALLWFAAGSVLVVLVLRWVP.

It belongs to the glycosyltransferase 51 family.

Its subcellular location is the cell inner membrane. It catalyses the reaction [GlcNAc-(1-&gt;4)-Mur2Ac(oyl-L-Ala-gamma-D-Glu-L-Lys-D-Ala-D-Ala)](n)-di-trans,octa-cis-undecaprenyl diphosphate + beta-D-GlcNAc-(1-&gt;4)-Mur2Ac(oyl-L-Ala-gamma-D-Glu-L-Lys-D-Ala-D-Ala)-di-trans,octa-cis-undecaprenyl diphosphate = [GlcNAc-(1-&gt;4)-Mur2Ac(oyl-L-Ala-gamma-D-Glu-L-Lys-D-Ala-D-Ala)](n+1)-di-trans,octa-cis-undecaprenyl diphosphate + di-trans,octa-cis-undecaprenyl diphosphate + H(+). The protein operates within cell wall biogenesis; peptidoglycan biosynthesis. Peptidoglycan polymerase that catalyzes glycan chain elongation from lipid-linked precursors. The sequence is that of Biosynthetic peptidoglycan transglycosylase from Pseudomonas savastanoi pv. phaseolicola (strain 1448A / Race 6) (Pseudomonas syringae pv. phaseolicola (strain 1448A / Race 6)).